The sequence spans 270 residues: HTH-type transcriptional activator AllS (270 aa).

The region spanning L4 to T61 is the HTH lysR-type domain. Positions F21 to K40 form a DNA-binding region, H-T-H motif.

Belongs to the LysR transcriptional regulatory family.

Positive regulator essential for the expression of allD operon. Binds to the allD promoter. This is HTH-type transcriptional activator AllS (allS) from Klebsiella pneumoniae.